A 1042-amino-acid chain; its full sequence is Ubiquitin carboxyl-terminal hydrolase 38 (1042 aa).

The USP domain occupies 445–949; that stretch reads TGLINLGNTC…TAYVLLYKKQ (505 aa). Cysteine 454 acts as the Nucleophile in catalysis. Catalysis depends on histidine 857, which acts as the Proton acceptor.

The protein belongs to the peptidase C19 family. In terms of assembly, interacts with isoform 1 of FBXW7; this interaction prevents FBXW7-mediated degradation of MYC. In terms of tissue distribution, highly expressed in skeletal muscle. Expressed in adrenal gland.

The protein resides in the cytoplasm. It is found in the nucleus. The catalysed reaction is Thiol-dependent hydrolysis of ester, thioester, amide, peptide and isopeptide bonds formed by the C-terminal Gly of ubiquitin (a 76-residue protein attached to proteins as an intracellular targeting signal).. In terms of biological role, deubiquitinating enzyme that plays a role in various cellular processes, including DNA repair, cell cycle regulation, and immune response. Plays a role in the inhibition of type I interferon signaling by mediating the 'Lys-33' to 'Lys-48' ubiquitination transition of TBK1 leading to its degradation. Cleaves the ubiquitin chain from the histone demethylase LSD1/KDM1A and prevents it from degradation by the 26S proteasome, thus maintaining LSD1 protein level in cells. Plays a role in the DNA damage response by regulating the deacetylase activity of HDAC1. Mechanistically, removes the 'Lys-63'-linked ubiquitin chain promoting the deacetylase activity of HDAC1 in response to DNA damage. Also acts as a specific deubiquitinase of histone deacetylase 3/HDAC3 and cleaves its 'Lys-63'-linked ubiquitin chains to lower its histone deacetylase activity. Regulates MYC levels and cell proliferation via antagonizing ubiquitin E3 ligase FBXW7 thereby preventing MYC 'Lys-48'-linked ubiquitination and degradation. Participates in antiviral response by removing both 'Lys-48'-linked and 'Lys-63'-linked polyubiquitination of Zika virus envelope protein E. Constitutively associated with IL-33R/IL1RL1, deconjugates its 'Lys-27'-linked polyubiquitination resulting in its autophagic degradation. This Homo sapiens (Human) protein is Ubiquitin carboxyl-terminal hydrolase 38 (USP38).